Consider the following 475-residue polypeptide: MSHKEPSAAETSTVVHSEEDKAFCIGTGAVISEEREKEVLKNLQNSLTGKTAEENLNDEANHTSSDKSKSEDYQPSNVNVWALRKEKMIPKKHSHVKQEKRFSKSLQLQDPNVWPSPEIAEKQVEDRKLSDDSQKPLAPKANGKEKWVTITPNFTHTPISNRKSSRSRNDGSRRNGNGRRRGNYSSHGSNKRQTNYSREKDASRSIDSSNPSAEYRDDINNTFGSQTVSSANGKEVPQTSEDSSSQAPHHSSSSGHAPSQQGGNKHSYKKSDSQQSFHHKGRNTRKGQRHNNGFYRNIANNIQGPFPNYPVVVNGNGVNPYLCDVQAFLTSQLEYYFSIENLCKDMFLRKHMDDEGYVPLAFLASFNRIKSFSTDLNLLHAACKASDIIDVAIDLQSPMSIKVRRKETWSPWILPSESRLKFEMAKYPQINSSSSMSPLASSISNLTISPPFIPSSVDSIIKRDVQTEVEDKLTV.

Residues 42–292 are disordered; sequence NLQNSLTGKT…NTRKGQRHNN (251 aa). Basic and acidic residues-rich tracts occupy residues 59-72 and 119-134; these read EANH…KSED and IAEK…DDSQ. Polar residues-rich tracts occupy residues 150-159 and 220-242; these read ITPNFTHTPI and NNTF…TSED. Residues 243 to 263 show a composition bias toward low complexity; it reads SSSQAPHHSSSSGHAPSQQGG. Residues 277–289 show a composition bias toward basic residues; the sequence is FHHKGRNTRKGQR. The HTH La-type RNA-binding domain occupies 319 to 408; the sequence is NPYLCDVQAF…MSIKVRRKET (90 aa). Thr-408 carries the post-translational modification Phosphothreonine. Position 410 is a phosphoserine (Ser-410).

It is found in the cytoplasm. This is an uncharacterized protein from Schizosaccharomyces pombe (strain 972 / ATCC 24843) (Fission yeast).